A 69-amino-acid polypeptide reads, in one-letter code: Large ribosomal subunit protein uL29 (69 aa).

Belongs to the universal ribosomal protein uL29 family.

The chain is Large ribosomal subunit protein uL29 from Mycoplasmopsis agalactiae (strain NCTC 10123 / CIP 59.7 / PG2) (Mycoplasma agalactiae).